Here is a 274-residue protein sequence, read N- to C-terminus: Hematopoietically-expressed homeobox protein hhex (274 aa).

Positions 139–198 (RKGGQVRFSNDQTIELEKKFETQKYLSPPERKRLAKMLQLSERQVKTWFQNRRAKWRRLK) form a DNA-binding region, homeobox. The segment at 197-274 (LKQENPQGNK…GDKGFYNCAH (78 aa)) is disordered. Residues 237–248 (DEPTSSPTSQET) are compositionally biased toward polar residues. A compositionally biased stretch (acidic residues) spans 249 to 263 (LDSEVSDDSDQEVDI).

In terms of tissue distribution, expressed in the most dorsoanterior endomesoderm of the blastula and gastrula embryo, and later is restricted to the forming liver diverticulum.

It localises to the nucleus. In terms of biological role, recognizes the DNA sequence 5'-ATTAA-3'. Transcriptional repressor. Regulates the differentiation of both endothelial and blood cells. Probably plays a role in the proliferation of vascular endothelial cells during blood vessel development. Establishes anterior identity at two levels; acts early to enhance canonical wnt-signaling by repressing expression of tle4, and acts later to inhibit nodal-signaling by directly targeting nodal/nr1 and nodal2/nr2. May play a role in liver development. Induces heart development. This Xenopus tropicalis (Western clawed frog) protein is Hematopoietically-expressed homeobox protein hhex.